Reading from the N-terminus, the 660-residue chain is Secretin PulD (660 aa).

Positions 1–27 (MIIANVIRSFSLTLLIFAALLFRPAAA) are cleaved as a signal peptide. Residues 28 to 124 (EEFSASFKGT…VASDAAPGIG (97 aa)) form an N0 region. The N1 stretch occupies residues 126 to 190 (EVVTRVVPLT…TIVERVDNAG (65 aa)). An N2 region spans residues 191–264 (DRSVVTVPLS…MIKQLDRQQA (74 aa)). The segment at 267–341 (GNTKVIYLKY…DLERVIAQLD (75 aa)) is N3. The interval 346–596 (QVLVEAIIAE…LFIRPTVIRD (251 aa)) is secretin. A s domain region spans residues 598-660 (DEYRQASSGQ…IDAFNLGGNL (63 aa)).

Belongs to the bacterial secretin family. GSP D subfamily. As to quaternary structure, forms a cylindrical channel with 15 subunits.

Its subcellular location is the cell outer membrane. In terms of biological role, involved in a type II secretion system (T2SS, formerly general secretion pathway, GSP) for the export of proteins. Required for the translocation of pullulanase. This subunit forms the outer membrane channel. The protein is Secretin PulD (pulD) of Klebsiella pneumoniae.